Consider the following 296-residue polypeptide: Pyridoxine/pyridoxal/pyridoxamine kinase (296 aa).

Residues Ser-23 and His-59 each contribute to the substrate site. Position 125 (Asp-125) interacts with ATP. Tyr-136 contacts Mg(2+). ATP-binding positions include Thr-157, Glu-162, Thr-195, 222-225 (HQRV), and Thr-232. Position 162 (Glu-162) interacts with Mg(2+). Asp-234 contributes to the substrate binding site.

It belongs to the pyridoxine kinase family. PdxK subfamily. In terms of assembly, homodimer. It depends on Mg(2+) as a cofactor.

It carries out the reaction pyridoxal + ATP = pyridoxal 5'-phosphate + ADP + H(+). It catalyses the reaction pyridoxine + ATP = pyridoxine 5'-phosphate + ADP + H(+). The catalysed reaction is pyridoxamine + ATP = pyridoxamine 5'-phosphate + ADP + H(+). Its pathway is cofactor metabolism; pyridoxal 5'-phosphate salvage; pyridoxal 5'-phosphate from pyridoxal: step 1/1. It participates in cofactor metabolism; pyridoxal 5'-phosphate salvage; pyridoxine 5'-phosphate from pyridoxine: step 1/1. The protein operates within cofactor metabolism; pyridoxal 5'-phosphate salvage; pyridoxamine 5'-phosphate from pyridoxamine: step 1/1. B6-vitamer kinase involved in the salvage pathway of pyridoxal 5'-phosphate (PLP). Catalyzes the phosphorylation of pyridoxine (PN), pyridoxal (PL), and pyridoxamine (PM), forming their respective 5'-phosphorylated esters, i.e. PNP, PLP and PMP. The sequence is that of Pyridoxine/pyridoxal/pyridoxamine kinase from Bordetella avium (strain 197N).